Here is a 171-residue protein sequence, read N- to C-terminus: Large ribosomal subunit protein bL9 (171 aa).

This sequence belongs to the bacterial ribosomal protein bL9 family.

Functionally, binds to the 23S rRNA. This is Large ribosomal subunit protein bL9 from Rickettsia peacockii (strain Rustic).